We begin with the raw amino-acid sequence, 87 residues long: MANIKSAKKRIKVTETKTLKNRMIKSALKTTIKKFEAAIEAKNNEEAKALFTSVVKSLDMAATKGVVHKNMAARKKSRLAAKLNSMA.

Belongs to the bacterial ribosomal protein bS20 family.

Functionally, binds directly to 16S ribosomal RNA. The protein is Small ribosomal subunit protein bS20 of Clostridium beijerinckii (strain ATCC 51743 / NCIMB 8052) (Clostridium acetobutylicum).